We begin with the raw amino-acid sequence, 149 residues long: Transcriptional repressor NrdR (149 aa).

Residues 3 to 34 (CPFCSAVDTKVIDSRLVGEGSQVRRRRQCLVC) fold into a zinc finger. The ATP-cone domain maps to 49-139 (PRVIKSNEVR…VYRSFEDIRE (91 aa)).

This sequence belongs to the NrdR family. Requires Zn(2+) as cofactor.

In terms of biological role, negatively regulates transcription of bacterial ribonucleotide reductase nrd genes and operons by binding to NrdR-boxes. The protein is Transcriptional repressor NrdR of Pectobacterium carotovorum subsp. carotovorum (strain PC1).